A 613-amino-acid polypeptide reads, in one-letter code: Activating transcription factor 3 (613 aa).

Disordered stretches follow at residues 77–115 and 133–218; these read RHFN…PSVQ and KRKL…NKIA. The span at 85–105 shows a compositional bias: low complexity; sequence GQSHSQDSSHSSCSGSPLDSP. Polar residues predominate over residues 138–147; that stretch reads TCDSSSGSEQ. Positions 158–175 are enriched in low complexity; the sequence is NHNGHSGSSNNYSGSMSN. The segment covering 178 to 191 has biased composition (acidic residues); it reads DLDDDCEESSDDDS. A bZIP domain is found at 205 to 268; sequence EDRRRRRRER…QKLVDMLKSH (64 aa). Residues 207–229 form a basic motif region; that stretch reads RRRRRRERNKIAATKCRMKKRER. Residues 233–261 are leucine-zipper; sequence LIKESEVLDTQNVELKNQVRQLETERQKL. The tract at residues 337-446 is disordered; that stretch reads PNGYCKPSPS…SSNATSSTTP (110 aa). The span at 356–368 shows a compositional bias: low complexity; the sequence is QQQQQQQQQQQPQ. The segment covering 369–389 has biased composition (polar residues); the sequence is SLNPAGNNVIDQQHANPSPSL. The segment covering 402-446 has biased composition (low complexity); the sequence is GSASNHPSHNNNNNNNNSSGASSNTSNNNSNISSHSSNATSSTTP.

The protein belongs to the bZIP family. ATF subfamily. Interacts with Jra/jun; the interaction enhances the DNA-binding activity of Atf3. Moderate expression in some regions of the larval nervous system, the ring gland and imaginal disks. High expression in larval gut, excretory malpighian tubules, salivary glands, and, to a lesser extent, the fat body where levels are approximately 2.5-fold less than the gut.

It is found in the nucleus. Its function is as follows. Transcription factor which binds to the cAMP response element (CRE). Regulates metabolic and innate immune homeostasis, possibly by controlling appropriate expression of genes involved in peritrophic matrix composition and ensuring the normal digestive and immune function of the gut. Required for the expression of odorant receptors Or43b and Or47b. This Drosophila melanogaster (Fruit fly) protein is Activating transcription factor 3.